A 348-amino-acid chain; its full sequence is Dihydroorotase (348 aa).

Zn(2+) contacts are provided by histidine 17 and histidine 19. Residues 19 to 21 (HLR) and asparagine 45 contribute to the substrate site. Zn(2+) is bound by residues lysine 103, histidine 140, and histidine 178. At lysine 103 the chain carries N6-carboxylysine. Histidine 140 is a binding site for substrate. Leucine 223 contributes to the substrate binding site. Aspartate 251 provides a ligand contact to Zn(2+). Aspartate 251 is an active-site residue. Residues histidine 255 and alanine 267 each contribute to the substrate site.

Belongs to the metallo-dependent hydrolases superfamily. DHOase family. Class II DHOase subfamily. As to quaternary structure, homodimer. Requires Zn(2+) as cofactor.

It carries out the reaction (S)-dihydroorotate + H2O = N-carbamoyl-L-aspartate + H(+). It functions in the pathway pyrimidine metabolism; UMP biosynthesis via de novo pathway; (S)-dihydroorotate from bicarbonate: step 3/3. In terms of biological role, catalyzes the reversible cyclization of carbamoyl aspartate to dihydroorotate. This is Dihydroorotase from Cronobacter sakazakii (strain ATCC BAA-894) (Enterobacter sakazakii).